The sequence spans 443 residues: Glucose-6-phosphate isomerase (443 aa).

The Proton donor role is filled by E285. Active-site residues include H306 and K420.

This sequence belongs to the GPI family.

The protein resides in the cytoplasm. It catalyses the reaction alpha-D-glucose 6-phosphate = beta-D-fructose 6-phosphate. The protein operates within carbohydrate biosynthesis; gluconeogenesis. It functions in the pathway carbohydrate degradation; glycolysis; D-glyceraldehyde 3-phosphate and glycerone phosphate from D-glucose: step 2/4. Its function is as follows. Catalyzes the reversible isomerization of glucose-6-phosphate to fructose-6-phosphate. This is Glucose-6-phosphate isomerase from Staphylococcus aureus (strain bovine RF122 / ET3-1).